Consider the following 328-residue polypeptide: Dihydroorotate dehydrogenase (quinone), mitochondrial (328 aa).

The helical transmembrane segment at 21–38 (AHGLSIAGLKTGLVTGSA) threads the bilayer. Residues 61-65 (AGYDK) and T85 contribute to the FMN site. K65 contributes to the substrate binding site. 110–114 (NRLGF) serves as a coordination point for substrate. FMN is bound by residues N139 and N170. 170–175 (NISSPN) provides a ligand contact to substrate. S173 functions as the Nucleophile in the catalytic mechanism. Residues K215 and S243 each coordinate FMN. 244–245 (NT) is a substrate binding site. Residues G266 and G295 each coordinate FMN.

Belongs to the dihydroorotate dehydrogenase family. Type 2 subfamily. It depends on FMN as a cofactor.

The protein localises to the mitochondrion inner membrane. It carries out the reaction (S)-dihydroorotate + a quinone = orotate + a quinol. It functions in the pathway pyrimidine metabolism; UMP biosynthesis via de novo pathway; orotate from (S)-dihydroorotate (quinone route): step 1/1. In terms of biological role, catalyzes the conversion of dihydroorotate to orotate with quinone as electron acceptor. In Cyclocybe aegerita (Black poplar mushroom), this protein is Dihydroorotate dehydrogenase (quinone), mitochondrial (URA1).